Reading from the N-terminus, the 295-residue chain is Acetylglutamate kinase (295 aa).

Residues 61–62 (GG), Arg-83, and Asn-182 contribute to the substrate site.

Belongs to the acetylglutamate kinase family. ArgB subfamily.

Its subcellular location is the cytoplasm. The enzyme catalyses N-acetyl-L-glutamate + ATP = N-acetyl-L-glutamyl 5-phosphate + ADP. It participates in amino-acid biosynthesis; L-arginine biosynthesis; N(2)-acetyl-L-ornithine from L-glutamate: step 2/4. In terms of biological role, catalyzes the ATP-dependent phosphorylation of N-acetyl-L-glutamate. This Clostridium acetobutylicum (strain ATCC 824 / DSM 792 / JCM 1419 / IAM 19013 / LMG 5710 / NBRC 13948 / NRRL B-527 / VKM B-1787 / 2291 / W) protein is Acetylglutamate kinase.